The chain runs to 297 residues: ClpXP adapter protein SpxH (297 aa).

Belongs to the SpxH family. Interacts with Spx.

It is found in the cytoplasm. Its function is as follows. Adapter protein required for efficient degradation of Spx by ClpXP under non-stress conditions. Interaction with Spx stabilizes Spx and exposes the C-terminus of Spx for recognition and proteolysis by ClpXP. In Bacillus cereus (strain ZK / E33L), this protein is ClpXP adapter protein SpxH.